A 32-amino-acid polypeptide reads, in one-letter code: Trypsin inhibitor 2b (32 aa).

Cystine bridges form between cysteine 3–cysteine 20, cysteine 10–cysteine 22, and cysteine 16–cysteine 29.

The protein belongs to the protease inhibitor I7 (squash-type serine protease inhibitor) family.

It is found in the secreted. Inhibits trypsin. In Cucumis sativus (Cucumber), this protein is Trypsin inhibitor 2b.